A 425-amino-acid polypeptide reads, in one-letter code: uncharacterized protein (425 aa).

The TRAM domain maps to 1 to 57 (MKDKPLKLTVEKLVYGGYGFSRLNGKAVFVRFASPKELVEAKVVKEKKDYTEAVVTK). [4Fe-4S] cluster-binding residues include cysteine 70, cysteine 76, cysteine 79, and cysteine 153. Residues glutamine 260, aspartate 308, and aspartate 354 each coordinate S-adenosyl-L-methionine. Catalysis depends on cysteine 381, which acts as the Nucleophile.

The protein belongs to the class I-like SAM-binding methyltransferase superfamily. RNA M5U methyltransferase family.

This is an uncharacterized protein from Aquifex aeolicus (strain VF5).